The sequence spans 217 residues: Protein-L-isoaspartate O-methyltransferase 2 (217 aa).

Ser-62 is an active-site residue.

This sequence belongs to the methyltransferase superfamily. L-isoaspartyl/D-aspartyl protein methyltransferase family.

It localises to the cytoplasm. The catalysed reaction is [protein]-L-isoaspartate + S-adenosyl-L-methionine = [protein]-L-isoaspartate alpha-methyl ester + S-adenosyl-L-homocysteine. Catalyzes the methyl esterification of L-isoaspartyl residues in peptides and proteins that result from spontaneous decomposition of normal L-aspartyl and L-asparaginyl residues. It plays a role in the repair and/or degradation of damaged proteins. The sequence is that of Protein-L-isoaspartate O-methyltransferase 2 from Geotalea uraniireducens (strain Rf4) (Geobacter uraniireducens).